We begin with the raw amino-acid sequence, 570 residues long: Glutamate--tRNA ligase (570 aa).

Residues 107–117 carry the 'HIGH' region motif; it reads PNPDFVLHLGS.

Belongs to the class-I aminoacyl-tRNA synthetase family. Glutamate--tRNA ligase type 2 subfamily.

It localises to the cytoplasm. The catalysed reaction is tRNA(Glu) + L-glutamate + ATP = L-glutamyl-tRNA(Glu) + AMP + diphosphate. Its function is as follows. Catalyzes the attachment of glutamate to tRNA(Glu) in a two-step reaction: glutamate is first activated by ATP to form Glu-AMP and then transferred to the acceptor end of tRNA(Glu). This chain is Glutamate--tRNA ligase, found in Pyrobaculum aerophilum (strain ATCC 51768 / DSM 7523 / JCM 9630 / CIP 104966 / NBRC 100827 / IM2).